We begin with the raw amino-acid sequence, 116 residues long: Flagellar transcriptional regulator FlhD (116 aa).

This sequence belongs to the FlhD family. In terms of assembly, homodimer; disulfide-linked. Forms a heterohexamer composed of two FlhC and four FlhD subunits. Each FlhC binds a FlhD dimer, forming a heterotrimer, and a hexamer assembles by dimerization of two heterotrimers.

The protein localises to the cytoplasm. Functionally, functions in complex with FlhC as a master transcriptional regulator that regulates transcription of several flagellar and non-flagellar operons by binding to their promoter region. Activates expression of class 2 flagellar genes, including fliA, which is a flagellum-specific sigma factor that turns on the class 3 genes. Also regulates genes whose products function in a variety of physiological pathways. In Salmonella arizonae (strain ATCC BAA-731 / CDC346-86 / RSK2980), this protein is Flagellar transcriptional regulator FlhD.